A 541-amino-acid polypeptide reads, in one-letter code: Zinc finger protein 503 (541 aa).

The segment covering 1–18 (MSNSPLGSGSRISHFTTE) has biased composition (polar residues). 2 disordered regions span residues 1-49 (MSNS…QAGR) and 97-255 (TCSQ…SSSV). Positions 137-157 (AEDKSSFKPYSKHPDKKDQSA) are enriched in basic and acidic residues. Positions 236 to 255 (SLSAAPSPTPASSSSSSSSV) are enriched in low complexity. The C2H2-type zinc-finger motif lies at 411–439 (HVCNWVSATGPCDKRFSSSEELLGHLRTH). The segment at 474–511 (GASPGPLTLRSPHHHPLGLSSSRYHPYSKSPLPSGGAP) is disordered.

This sequence belongs to the Elbow/Noc family.

Its subcellular location is the nucleus. Functionally, may function as a transcriptional repressor. This chain is Zinc finger protein 503 (znf503), found in Xenopus tropicalis (Western clawed frog).